Reading from the N-terminus, the 133-residue chain is Putative esterase STK_17900 (133 aa).

The protein belongs to the thioesterase PaaI family.

This chain is Putative esterase STK_17900, found in Sulfurisphaera tokodaii (strain DSM 16993 / JCM 10545 / NBRC 100140 / 7) (Sulfolobus tokodaii).